We begin with the raw amino-acid sequence, 385 residues long: Ethanolamine kinase 2 (385 aa).

Belongs to the choline/ethanolamine kinase family. As to expression, expressed in testis and liver. Low expression in ovary and kidney.

The enzyme catalyses ethanolamine + ATP = phosphoethanolamine + ADP + H(+). Its pathway is phospholipid metabolism; phosphatidylethanolamine biosynthesis; phosphatidylethanolamine from ethanolamine: step 1/3. Highly specific for ethanolamine phosphorylation. Does not have choline kinase activity. The polypeptide is Ethanolamine kinase 2 (Etnk2) (Mus musculus (Mouse)).